A 1183-amino-acid polypeptide reads, in one-letter code: MKYVKAFVSEISWDCSWYCSAMQERRNEDRQKEEEERILQANNRRFNSLFEYPDNSIKTSKYGFFNFLPMNLFEQFQRLANAYFLILLFLQLVPQISSLAWYTTVIPLIVVLSITGVKDAIDDVKRHRSDQQINNRSVSILVNGRVEEIKWRNVQVGDIIKLENNHPVTADMLLLSSSEPYGLTYIETADLDGETNLKVKQAISVTSAMEDNLELLSSFNGEVRCDPPNNKLDKFSGTLSYLGNTYLLNHERLLLRGCVIRNTDWCYGLVVYTGQDTKLMQNSGRSTFKRTHIDHLMNVLVVWIFMFLGGMCFLLSIGHGIWENSRGYYFQAFLPWKHYITSSATSSALIFWSYFIVLNTMVPISLYVSVEIIRLGNSYYINWDRKMFYAPKNMPAQARTTTLNEELGQVQYVFSDKTGTLTENVMIFNKCSINGKTYGYSYDDNGEYVPKSPKDKVDFSYNHLADPKFSFYDKTLVEAVKSEDPLVYLFFLCLSLCHTVMSEEKVEGELVYQAQSPDEGALVTATRNFGFVFCSRTPETITVIEMGKIRVYRLLAILDFSNERKRMSVIVRTPEDRVMLFCKGADTIIYELLHPSCASLSEVTMDHLDDFASEGLRTLMVAYRELDKAYFQTWIKKHGEAWLTLENRERKLALVYEEIERDLMLLGATAIEDKLQRGVPETIVTLSKAKIKIWVLTGDKQETAVNIAYSCRIFKDEMDGVFMVEGTDRETVLEELRTARKKMKPESLLESDPINMYLARKPKMPFKSLDEVANGNYGLVISGYSLAYALEGSLEFELLRTACMCKGVVCCRMTPLQKAQVVDLVKRYKKVVTLAIGDGANDISMIKAAHIGVGISNQEGMQATLSSDFSFCQFHFLQRLLLVHGRLSYNRMCKFLSYFFYKNFAFTLVHFWYAFFNGFSAQTVYDIWFITFYNLIYTSLPVLGLSLFEKDVNETWSLCYPELYEPGQHNLYFNKKEFVKCLLHGIYNSFVLFFVPMGTVFNSERNDGKDISDFQSFSLLVQTTLIGVMTMQIALRTTSWTMINHTFTWGSLGLYFCILILLCSDGLCLRYPSIFNFLGVARNSLSQPQIWLCLILSTILCMIPLIGYNFLRPLLWPINADKVLNRIHFCLKHPIPTQVQTKIKHPSLRRSAYAFSHKQGFGALITSGKTLKSSALAKSKRFL.

Transmembrane regions (helical) follow at residues 96 to 116, 299 to 319, and 348 to 368; these read ISSL…SITG, VLVV…SIGH, and ALIF…SLYV. The active-site 4-aspartylphosphate intermediate is the aspartate 416. The ATP site is built by aspartate 416, lysine 417, threonine 418, glutamate 519, phenylalanine 560, lysine 583, arginine 617, threonine 697, glycine 698, aspartate 699, arginine 812, and lysine 818. Aspartate 416 contacts Mg(2+). Threonine 418 provides a ligand contact to Mg(2+). Aspartate 838 is a binding site for Mg(2+). ATP-binding residues include asparagine 841 and aspartate 842. Residue aspartate 842 coordinates Mg(2+). Helical transmembrane passes span 904–924, 927–947, 981–1001, 1014–1034, 1049–1069, and 1090–1110; these read FAFT…AQTV, IWFI…GLSL, CLLH…GTVF, FQSF…MQIA, WGSL…GLCL, and IWLC…GYNF.

Belongs to the cation transport ATPase (P-type) (TC 3.A.3) family. Type IV subfamily. Mg(2+) serves as cofactor. Highly expressed in testis.

It is found in the cytoplasmic vesicle. The protein localises to the secretory vesicle. Its subcellular location is the acrosome membrane. It catalyses the reaction ATP + H2O + phospholipidSide 1 = ADP + phosphate + phospholipidSide 2.. P4-ATPase flippase which catalyzes the hydrolysis of ATP coupled to the transport of aminophospholipids from the outer to the inner leaflet of various membranes and ensures the maintenance of asymmetric distribution of phospholipids. Phospholipid translocation also seems to be implicated in vesicle formation and in uptake of lipid signaling molecules. May play a role in phospholid transport across membranes and in acrosome formation. In Mus musculus (Mouse), this protein is Phospholipid-transporting ATPase FetA (Atp8b5).